The primary structure comprises 366 residues: MNKVVLLCRPGFEKECAAEITDKAGQREIFGFARVKENAGYVIYECYQPDDGDKLIRELPFSSLIFARQWFVVGELLQHLPPEDRITPIVDMLQGVVEKGGELRVEVADTNESKELLKFCRKFTVPLRAALRDAGVLANYETPKRPVVHVFFIAPGCCYTGYSYSNNNSPFYMGIPRLKFPAEAPSRSTLKLEEAFHVFIPADEWDERLANGMWAVDLGACPGGWTYQLVKRNMWVYSVDNGPMAQSLMDTGQVTWLREDGFKFRPTRSNISWMVCDMVEKPAKVAALMAQWLVNGWCRETIFNLKLPMKKRYEEVSHNLAYIQAQLDEHGINAQIQARQLYHDREEVTVHVRRIWAAVGGRRDER.

S-adenosyl-L-methionine-binding positions include S188, 221–224 (CPGG), D240, D260, and D277. K306 (proton acceptor) is an active-site residue.

The protein belongs to the class I-like SAM-binding methyltransferase superfamily. RNA methyltransferase RlmE family. RlmM subfamily. In terms of assembly, monomer.

The protein resides in the cytoplasm. The catalysed reaction is cytidine(2498) in 23S rRNA + S-adenosyl-L-methionine = 2'-O-methylcytidine(2498) in 23S rRNA + S-adenosyl-L-homocysteine + H(+). In terms of biological role, catalyzes the 2'-O-methylation at nucleotide C2498 in 23S rRNA. The polypeptide is Ribosomal RNA large subunit methyltransferase M (Shigella sonnei (strain Ss046)).